The following is a 200-amino-acid chain: Pyridoxal 5'-phosphate synthase subunit PdxT (200 aa).

50-52 serves as a coordination point for L-glutamine; the sequence is GES. C82 serves as the catalytic Nucleophile. L-glutamine contacts are provided by residues R110 and 138-139; that span reads IR. Active-site charge relay system residues include H174 and E176.

It belongs to the glutaminase PdxT/SNO family. In the presence of PdxS, forms a dodecamer of heterodimers. Only shows activity in the heterodimer.

The catalysed reaction is aldehydo-D-ribose 5-phosphate + D-glyceraldehyde 3-phosphate + L-glutamine = pyridoxal 5'-phosphate + L-glutamate + phosphate + 3 H2O + H(+). It catalyses the reaction L-glutamine + H2O = L-glutamate + NH4(+). It participates in cofactor biosynthesis; pyridoxal 5'-phosphate biosynthesis. Functionally, catalyzes the hydrolysis of glutamine to glutamate and ammonia as part of the biosynthesis of pyridoxal 5'-phosphate. The resulting ammonia molecule is channeled to the active site of PdxS. This chain is Pyridoxal 5'-phosphate synthase subunit PdxT, found in Oceanobacillus iheyensis (strain DSM 14371 / CIP 107618 / JCM 11309 / KCTC 3954 / HTE831).